Consider the following 164-residue polypeptide: N5-carboxyaminoimidazole ribonucleotide mutase (164 aa).

Serine 13, aspartate 16, and arginine 43 together coordinate substrate.

This sequence belongs to the AIR carboxylase family. Class I subfamily.

The enzyme catalyses 5-carboxyamino-1-(5-phospho-D-ribosyl)imidazole + H(+) = 5-amino-1-(5-phospho-D-ribosyl)imidazole-4-carboxylate. Its pathway is purine metabolism; IMP biosynthesis via de novo pathway; 5-amino-1-(5-phospho-D-ribosyl)imidazole-4-carboxylate from 5-amino-1-(5-phospho-D-ribosyl)imidazole (N5-CAIR route): step 2/2. Its function is as follows. Catalyzes the conversion of N5-carboxyaminoimidazole ribonucleotide (N5-CAIR) to 4-carboxy-5-aminoimidazole ribonucleotide (CAIR). In Haemophilus influenzae (strain ATCC 51907 / DSM 11121 / KW20 / Rd), this protein is N5-carboxyaminoimidazole ribonucleotide mutase.